A 382-amino-acid polypeptide reads, in one-letter code: Gap junction alpha-1 protein (382 aa).

Residues 2-23 lie on the Cytoplasmic side of the membrane; that stretch reads GDWSALGKLLDKVQAYSTAGGK. Ser-5 is modified (phosphoserine). A helical membrane pass occupies residues 24 to 44; sequence VWLSVLFIFRILLLGTAVESA. At 45–76 the chain is on the extracellular side; that stretch reads WGDEQSAFRCNTQQPGCENVCYDKSFPISHVR. 2 cysteine pairs are disulfide-bonded: Cys-54–Cys-192 and Cys-187–Cys-198. A helical transmembrane segment spans residues 77-97; that stretch reads FWVLQIIFVSVPTLLYLAHVF. Residues 98 to 155 are Cytoplasmic-facing; the sequence is YVMRKEEKLNKKEEELKVAQTDGVNVEMHLKQIEIKKFKYGIEEHGKVKMRGGLLRTY. A Glycyl lysine isopeptide (Lys-Gly) (interchain with G-Cter in SUMO) cross-link involves residue Lys-144. A helical transmembrane segment spans residues 156-176; that stretch reads IISILFKSVFEVAFLLIQWYI. Residues 177–207 lie on the Extracellular side of the membrane; that stretch reads YGFSLSAVYTCKRDPCPHQVDCFLSRPTEKT. The helical transmembrane segment at 208 to 228 threads the bilayer; the sequence is IFIIFMLVVSLVSLALNIIEL. Residues 229 to 382 lie on the Cytoplasmic side of the membrane; sequence FYVFFKGVKD…SRPRPDDLEI (154 aa). Residue Lys-237 forms a Glycyl lysine isopeptide (Lys-Gly) (interchain with G-Cter in SUMO) linkage. Residues 244–382 form an interaction with NOV region; that stretch reads SDPYHATTGP…SRPRPDDLEI (139 aa). Tyr-247 is modified (phosphotyrosine). Phosphoserine occurs at positions 255, 257, and 262. Positions 264-382 are interaction with UBQLN4; that stretch reads KYAYFNGCSS…SRPRPDDLEI (119 aa). Cys-271 is modified (S-nitrosocysteine). The residue at position 275 (Thr-275) is a Phosphothreonine. 2 positions are modified to phosphoserine: Ser-306 and Ser-314. The span at 317–332 shows a compositional bias: polar residues; sequence QNRMGQAGSTISNSHA. Residues 317 to 382 form a disordered region; it reads QNRMGQAGST…SRPRPDDLEI (66 aa). At Ser-325 the chain carries Phosphoserine; by CK1. Thr-326 carries the phosphothreonine modification. Ser-328 and Ser-330 each carry phosphoserine; by CK1. A phosphoserine mark is found at Ser-344 and Ser-365. The span at 362–374 shows a compositional bias: low complexity; sequence RPSSRASSRASSR. Ser-368 bears the Phosphoserine; by PKC/PRKCG and PKC/PRKCD mark. Ser-369 and Ser-373 each carry phosphoserine.

This sequence belongs to the connexin family. Alpha-type (group II) subfamily. In terms of assembly, a connexon is composed of a hexamer of connexins. Interacts with SGSM3. Interacts with RIC1/CIP150. Interacts with CNST and CSNK1D. Interacts (via C-terminus) with TJP1. Interacts (via C-terminus) with SRC (via SH3 domain). Interacts (not ubiquitinated) with UBQLN4 (via UBA domain). Interacts with NOV. Interacts with TMEM65. Interacts with ANK3/ANKG and PKP2. Post-translationally, phosphorylation at Ser-325, Ser-328 and Ser-330 by CK1 modulates gap junction assembly. Phosphorylated at Ser-368 by PRKCG; phosphorylation induces disassembly of gap junction plaques and inhibition of gap junction activity. Phosphorylation at Ser-368 by PRKCD triggers its internalization into small vesicles leading to proteasome-mediated degradation. In terms of processing, sumoylated with SUMO1, SUMO2 and SUMO3, which may regulate the level of functional Cx43 gap junctions at the plasma membrane. May be desumoylated by SENP1 or SENP2. S-nitrosylation at Cys-271 is enriched at the muscle endothelial gap junction in arteries, it augments channel permeability and may regulate of smooth muscle cell to endothelial cell communication. Post-translationally, acetylated in the developing cortex; leading to delocalization from the cell membrane.

The protein resides in the cell membrane. Its subcellular location is the cell junction. It localises to the gap junction. The protein localises to the endoplasmic reticulum. Its function is as follows. Gap junction protein that acts as a regulator of bladder capacity. A gap junction consists of a cluster of closely packed pairs of transmembrane channels, the connexons, through which materials of low MW diffuse from one cell to a neighboring cell. May play a critical role in the physiology of hearing by participating in the recycling of potassium to the cochlear endolymph. Negative regulator of bladder functional capacity: acts by enhancing intercellular electrical and chemical transmission, thus sensitizing bladder muscles to cholinergic neural stimuli and causing them to contract. May play a role in cell growth inhibition through the regulation of NOV expression and localization. Plays an essential role in gap junction communication in the ventricles. The chain is Gap junction alpha-1 protein (GJA1) from Ursus americanus (American black bear).